The chain runs to 179 residues: Large ribosomal subunit protein uL5 (179 aa).

The protein belongs to the universal ribosomal protein uL5 family. Part of the 50S ribosomal subunit; part of the 5S rRNA/L5/L18/L25 subcomplex. Contacts the 5S rRNA and the P site tRNA. Forms a bridge to the 30S subunit in the 70S ribosome.

Functionally, this is one of the proteins that bind and probably mediate the attachment of the 5S RNA into the large ribosomal subunit, where it forms part of the central protuberance. In the 70S ribosome it contacts protein S13 of the 30S subunit (bridge B1b), connecting the 2 subunits; this bridge is implicated in subunit movement. Contacts the P site tRNA; the 5S rRNA and some of its associated proteins might help stabilize positioning of ribosome-bound tRNAs. The sequence is that of Large ribosomal subunit protein uL5 from Pseudoalteromonas translucida (strain TAC 125).